An 81-amino-acid polypeptide reads, in one-letter code: Large ribosomal subunit protein bL31B (81 aa).

The protein belongs to the bacterial ribosomal protein bL31 family. Type B subfamily. Part of the 50S ribosomal subunit.

The sequence is that of Large ribosomal subunit protein bL31B from Halalkalibacterium halodurans (strain ATCC BAA-125 / DSM 18197 / FERM 7344 / JCM 9153 / C-125) (Bacillus halodurans).